The sequence spans 233 residues: Ribonuclease 3 (233 aa).

Positions 6 to 135 constitute an RNase III domain; sequence QDYLAKEFNI…FIGALYLDQG (130 aa). E48 contributes to the Mg(2+) binding site. Residue D52 is part of the active site. Residues D121 and E124 each coordinate Mg(2+). E124 is a catalytic residue. The region spanning 161 to 230 is the DRBM domain; that stretch reads DAKTSLQEFL…AQQALDNMRN (70 aa). A disordered region spans residues 205 to 233; that stretch reads IGEGKGSSKKHAEMQAAQQALDNMRNKNK.

This sequence belongs to the ribonuclease III family. Homodimer. The cofactor is Mg(2+).

The protein resides in the cytoplasm. It catalyses the reaction Endonucleolytic cleavage to 5'-phosphomonoester.. Functionally, digests double-stranded RNA. Involved in the processing of primary rRNA transcript to yield the immediate precursors to the large and small rRNAs (23S and 16S). Processes some mRNAs, and tRNAs when they are encoded in the rRNA operon. Processes pre-crRNA and tracrRNA of type II CRISPR loci if present in the organism. The protein is Ribonuclease 3 of Limosilactobacillus reuteri (strain DSM 20016) (Lactobacillus reuteri).